Here is a 287-residue protein sequence, read N- to C-terminus: Undecaprenyl-diphosphatase (287 aa).

Helical transmembrane passes span 6–26 (LYLI…FIPV), 45–65 (SGKV…MWIF), 85–105 (AFTR…AIFI), 111–131 (VFYH…IMLW), 204–224 (ATEF…TYDL), 238–258 (AIAV…RAVL), and 265–285 (TYRG…AWLM).

This sequence belongs to the UppP family.

The protein resides in the cell inner membrane. It catalyses the reaction di-trans,octa-cis-undecaprenyl diphosphate + H2O = di-trans,octa-cis-undecaprenyl phosphate + phosphate + H(+). Catalyzes the dephosphorylation of undecaprenyl diphosphate (UPP). Confers resistance to bacitracin. The sequence is that of Undecaprenyl-diphosphatase from Bordetella petrii (strain ATCC BAA-461 / DSM 12804 / CCUG 43448).